A 287-amino-acid polypeptide reads, in one-letter code: 2-dehydro-3-deoxyphosphooctonate aldolase (287 aa).

Belongs to the KdsA family.

It is found in the cytoplasm. It catalyses the reaction D-arabinose 5-phosphate + phosphoenolpyruvate + H2O = 3-deoxy-alpha-D-manno-2-octulosonate-8-phosphate + phosphate. It functions in the pathway carbohydrate biosynthesis; 3-deoxy-D-manno-octulosonate biosynthesis; 3-deoxy-D-manno-octulosonate from D-ribulose 5-phosphate: step 2/3. The protein operates within bacterial outer membrane biogenesis; lipopolysaccharide biosynthesis. The protein is 2-dehydro-3-deoxyphosphooctonate aldolase of Magnetococcus marinus (strain ATCC BAA-1437 / JCM 17883 / MC-1).